The chain runs to 397 residues: Elongation factor Tu (397 aa).

The region spanning 10-207 (KPHLNIGTIG…AVDAYIPEPE (198 aa)) is the tr-type G domain. A G1 region spans residues 19-26 (GHVDHGKT). Residue 19 to 26 (GHVDHGKT) participates in GTP binding. T26 contributes to the Mg(2+) binding site. A G2 region spans residues 60–64 (GVTIN). Positions 81–84 (DCPG) are G3. Residues 81-85 (DCPGH) and 136-139 (NKVD) contribute to the GTP site. Residues 136–139 (NKVD) are G4. The G5 stretch occupies residues 174 to 176 (SAL).

The protein belongs to the TRAFAC class translation factor GTPase superfamily. Classic translation factor GTPase family. EF-Tu/EF-1A subfamily. In terms of assembly, monomer.

It localises to the cytoplasm. The enzyme catalyses GTP + H2O = GDP + phosphate + H(+). GTP hydrolase that promotes the GTP-dependent binding of aminoacyl-tRNA to the A-site of ribosomes during protein biosynthesis. This chain is Elongation factor Tu, found in Syntrophus aciditrophicus (strain SB).